A 295-amino-acid chain; its full sequence is Fructose-bisphosphate aldolase class 1 (295 aa).

Catalysis depends on E176, which acts as the Proton acceptor. Catalysis depends on K213, which acts as the Schiff-base intermediate with dihydroxyacetone-P.

Belongs to the class I fructose-bisphosphate aldolase family.

It carries out the reaction beta-D-fructose 1,6-bisphosphate = D-glyceraldehyde 3-phosphate + dihydroxyacetone phosphate. It participates in carbohydrate degradation; glycolysis; D-glyceraldehyde 3-phosphate and glycerone phosphate from D-glucose: step 4/4. This chain is Fructose-bisphosphate aldolase class 1, found in Clostridium acetobutylicum (strain ATCC 824 / DSM 792 / JCM 1419 / IAM 19013 / LMG 5710 / NBRC 13948 / NRRL B-527 / VKM B-1787 / 2291 / W).